A 99-amino-acid chain; its full sequence is Transcription factor 1 (99 aa).

2 may be involved in preference for HM-URA DNA regions span residues P52–V77 and E90–K99. 2 consecutive DNA-binding regions follow at residues F61 and K93–Y94.

This sequence belongs to the bacterial histone-like protein family. In terms of assembly, homodimer.

Its function is as follows. Selectively binds to and inhibits the transcription of hydroxymethyluracil-(hmUra)-containing DNA, such as SP01 DNA, by RNA polymerase in vitro. This Bacillus phage SP01 (Bacteriophage SP01) protein is Transcription factor 1 (TF1).